A 1404-amino-acid polypeptide reads, in one-letter code: DNA-directed RNA polymerase subunit beta' (1404 aa).

Residues Cys70, Cys72, Cys85, and Cys88 each contribute to the Zn(2+) site. Mg(2+) is bound by residues Asp460, Asp462, and Asp464. 4 residues coordinate Zn(2+): Cys814, Cys889, Cys896, and Cys899.

This sequence belongs to the RNA polymerase beta' chain family. The RNAP catalytic core consists of 2 alpha, 1 beta, 1 beta' and 1 omega subunit. When a sigma factor is associated with the core the holoenzyme is formed, which can initiate transcription. Mg(2+) serves as cofactor. The cofactor is Zn(2+).

The enzyme catalyses RNA(n) + a ribonucleoside 5'-triphosphate = RNA(n+1) + diphosphate. In terms of biological role, DNA-dependent RNA polymerase catalyzes the transcription of DNA into RNA using the four ribonucleoside triphosphates as substrates. The chain is DNA-directed RNA polymerase subunit beta' from Xanthomonas axonopodis pv. citri (strain 306).